The primary structure comprises 544 residues: Chaperonin GroEL 2 (544 aa).

ATP contacts are provided by residues 29-32 (TLGP), 86-90 (DGTTT), Gly-413, 479-481 (NAA), and Asp-495.

It belongs to the chaperonin (HSP60) family. In terms of assembly, forms a cylinder of 14 subunits composed of two heptameric rings stacked back-to-back. Interacts with the co-chaperonin GroES.

The protein resides in the cytoplasm. The catalysed reaction is ATP + H2O + a folded polypeptide = ADP + phosphate + an unfolded polypeptide.. Functionally, together with its co-chaperonin GroES, plays an essential role in assisting protein folding. The GroEL-GroES system forms a nano-cage that allows encapsulation of the non-native substrate proteins and provides a physical environment optimized to promote and accelerate protein folding. In Synechococcus sp. (strain CC9605), this protein is Chaperonin GroEL 2.